Reading from the N-terminus, the 1088-residue chain is MTILHSTMLSEVLDLESYRKKISDEVRECFDLASQARELGMDVTDKVEIPLASDMAERIEALIGISGIADQIRDLSKKMSREEVSLEMSRRVANIFKDNKKEALDKAIRVGLAILTEGILVAPLEGIADVYIGKNADGSDYVGISYAGPIRGAGGTAQALSVLIGDVVRRELGITRYIPTEEEIERYIEEIESYDRIKHLQYLPTPDEIKLVVKNSPVCIDGEGSEEEEVSGHRDMARVKTNRIRGGMCLVLCEGLVQKARKILKYTSSMHLEEWSFLSSISGKSDDKGSKKSDKFLKDIVAGRPVFSHPSRPGGFRLRYGRSRVSGLAAASLNPATMYIMGKFIAIGSQIKVELPGKAAAVTPCDTIDGPTVLLRNGDHVKINNIEKAKELYDEVVEITDAGEILIAYGDFLENNYNLPTASFTKEWWMQYLPDGLDGNEVDQFRAVELSRQYNIPLHPDFDYYWHDISFEELEYLISAVENGRLSDNSFLIPYSASEVLIKLGVQFKRSGNFLVLNQYYPLLVSLGYDVFEDKIKRVKPYQRKSSVLETVNYLSGITIKPRAPTRVGSRLGRPEKAGDRKMKPMVHSLFPVESYGEARRSILNANKKTDGTYKAEVFFYRCTSCGYESPSPTCPKCGSRSKPIGTKNSEIDLSVILRKAEDRLGIKLDELKEFKGVKKLMSKEKVAEPIEKGILRAIHGISVNKDGTCRFDMSDIPITHFRYKEIGISKEKLSELGYEVKDVNEIFPQDVIIPRKAAKYLFDVSKFIDDLLVRYYGLPPFYSLKSEEDLVGHLVIGLAPHTSGGVVGRIIGFSDVNAFYAHPFFHAAKRRNCDGDEDSVMLLMDGFLNFSARYLPSTTGGLMDAPLVLSVLINPDEIDKEALNVDTLQKYPLIFYEATERHAAPSELEETMMTMKVRIKKTATYRNSSYTFDTSDINKGVLVSSYKTLATMDDKISEQLGLARRIRAVDADDVAARVISTHFLPDMYGNFRRFFSQEFRCTKCNAKYRRIPLSGRCMKCGSDSLTLTIHKGSVIKYLDETLKIEKEYNIPKYLKERIDNLARTIKETFPDEEKPDAAIKITGLDMY.

This sequence belongs to the archaeal DNA polymerase II family. As to quaternary structure, heterodimer of a large subunit and a small subunit.

The enzyme catalyses DNA(n) + a 2'-deoxyribonucleoside 5'-triphosphate = DNA(n+1) + diphosphate. The catalysed reaction is Exonucleolytic cleavage in the 3'- to 5'-direction to yield nucleoside 5'-phosphates.. Functionally, possesses two activities: a DNA synthesis (polymerase) and an exonucleolytic activity that degrades single-stranded DNA in the 3'- to 5'-direction. Has a template-primer preference which is characteristic of a replicative DNA polymerase. The polypeptide is DNA polymerase II large subunit (polC) (Thermoplasma volcanium (strain ATCC 51530 / DSM 4299 / JCM 9571 / NBRC 15438 / GSS1)).